We begin with the raw amino-acid sequence, 331 residues long: Phosphoribosylformylglycinamidine cyclo-ligase (331 aa).

It belongs to the AIR synthase family.

The protein localises to the cytoplasm. It catalyses the reaction 2-formamido-N(1)-(5-O-phospho-beta-D-ribosyl)acetamidine + ATP = 5-amino-1-(5-phospho-beta-D-ribosyl)imidazole + ADP + phosphate + H(+). The protein operates within purine metabolism; IMP biosynthesis via de novo pathway; 5-amino-1-(5-phospho-D-ribosyl)imidazole from N(2)-formyl-N(1)-(5-phospho-D-ribosyl)glycinamide: step 2/2. This Clostridium botulinum (strain Okra / Type B1) protein is Phosphoribosylformylglycinamidine cyclo-ligase.